A 214-amino-acid chain; its full sequence is uncharacterized protein (214 aa).

An AMMECR1 domain is found at Met-1–Val-194.

This is an uncharacterized protein from Arabidopsis thaliana (Mouse-ear cress).